Consider the following 310-residue polypeptide: Small ribosomal subunit biogenesis GTPase RsgA (310 aa).

The CP-type G domain occupies 77–236 (KNELKRPNIA…IADTPGFSKL (160 aa)). Residues 126-129 (SKID) and 179-187 (GQTGVGKST) contribute to the GTP site. Zn(2+) contacts are provided by Cys-260, Cys-266, His-268, and Cys-274.

It belongs to the TRAFAC class YlqF/YawG GTPase family. RsgA subfamily. As to quaternary structure, monomer. Associates with 30S ribosomal subunit, binds 16S rRNA. Requires Zn(2+) as cofactor.

The protein localises to the cytoplasm. In terms of biological role, one of several proteins that assist in the late maturation steps of the functional core of the 30S ribosomal subunit. Helps release RbfA from mature subunits. May play a role in the assembly of ribosomal proteins into the subunit. Circularly permuted GTPase that catalyzes slow GTP hydrolysis, GTPase activity is stimulated by the 30S ribosomal subunit. The polypeptide is Small ribosomal subunit biogenesis GTPase RsgA (Phytoplasma australiense).